We begin with the raw amino-acid sequence, 103 residues long: Small ribosomal subunit protein uS10 (103 aa).

Belongs to the universal ribosomal protein uS10 family. Part of the 30S ribosomal subunit.

Involved in the binding of tRNA to the ribosomes. This Shewanella pealeana (strain ATCC 700345 / ANG-SQ1) protein is Small ribosomal subunit protein uS10.